The chain runs to 157 residues: Protein E6 (157 aa).

Zinc fingers lie at residues 41–77 (CNFCGKFLNYLEACEFDYKKLSLIWKDYCVFACCRVC) and 114–150 (CQTCLAFLDIIEKLDCCGRGLPFHKVRNAWKGICRQC).

The protein belongs to the papillomaviridae E6 protein family. In terms of assembly, forms homodimers. Interacts with ubiquitin-protein ligase UBE3A/E6-AP; this interaction stimulates UBE3A ubiquitin activity. Interacts with host BAK1.

The protein resides in the host cytoplasm. The protein localises to the host nucleus. In terms of biological role, plays a major role in the induction and maintenance of cellular transformation. E6 associates with host UBE3A/E6-AP ubiquitin-protein ligase and modulates its activity. Protects host keratinocytes from apoptosis by mediating the degradation of host BAK1. May also inhibit host immune response. This Human papillomavirus type 5b protein is Protein E6.